A 311-amino-acid chain; its full sequence is p-hydroxybenzoic acid efflux pump subunit AaeA (311 aa).

A helical transmembrane segment spans residues 11–31 (VGITVLVVVLAVIAIFNVWAF).

It belongs to the membrane fusion protein (MFP) (TC 8.A.1) family.

It is found in the cell inner membrane. In terms of biological role, forms an efflux pump with AaeB. This Yersinia pseudotuberculosis serotype O:1b (strain IP 31758) protein is p-hydroxybenzoic acid efflux pump subunit AaeA.